Reading from the N-terminus, the 391-residue chain is Succinate--CoA ligase [ADP-forming] subunit beta (391 aa).

The ATP-grasp domain occupies 9–248 (KDILRKFGVS…TGEEDPFEVE (240 aa)). ATP contacts are provided by residues lysine 50, 57 to 59 (GRG), glutamate 103, methionine 106, and glutamate 111. 2 residues coordinate Mg(2+): asparagine 203 and aspartate 217. Substrate-binding positions include asparagine 268 and 325-327 (GIV).

Belongs to the succinate/malate CoA ligase beta subunit family. In terms of assembly, heterotetramer of two alpha and two beta subunits. Requires Mg(2+) as cofactor.

The catalysed reaction is succinate + ATP + CoA = succinyl-CoA + ADP + phosphate. It catalyses the reaction GTP + succinate + CoA = succinyl-CoA + GDP + phosphate. Its pathway is carbohydrate metabolism; tricarboxylic acid cycle; succinate from succinyl-CoA (ligase route): step 1/1. Functionally, succinyl-CoA synthetase functions in the citric acid cycle (TCA), coupling the hydrolysis of succinyl-CoA to the synthesis of either ATP or GTP and thus represents the only step of substrate-level phosphorylation in the TCA. The beta subunit provides nucleotide specificity of the enzyme and binds the substrate succinate, while the binding sites for coenzyme A and phosphate are found in the alpha subunit. The protein is Succinate--CoA ligase [ADP-forming] subunit beta of Chlorobium phaeobacteroides (strain BS1).